A 278-amino-acid chain; its full sequence is Protein MGF 505-3R (278 aa).

This sequence belongs to the asfivirus MGF 505 family.

Functionally, plays a role in virus cell tropism, and may be required for efficient virus replication in macrophages. The sequence is that of Protein MGF 505-3R from African swine fever virus (isolate Tick/Malawi/Lil 20-1/1983) (ASFV).